Reading from the N-terminus, the 441-residue chain is Sec-independent protein translocase protein TatCo (441 aa).

Residues 1 to 185 are disordered; that stretch reads MADEERDAGL…LVGEAPESDQ (185 aa). Residues 13–22 are compositionally biased toward acidic residues; it reads ADDETDASDD. Over residues 51–62 the composition is skewed to basic and acidic residues; sequence TPRDETVTHGSD. Positions 75 to 104 are enriched in acidic residues; that stretch reads DNGDDSDSDTDAAPDDADDSATDSDADSDD. The span at 105 to 117 shows a compositional bias: basic and acidic residues; it reads EPRLLADDEHTSH. Composition is skewed to acidic residues over residues 122 to 138 and 164 to 173; these read TYDD…DPDA and EDADFDDEDV. The next 6 helical transmembrane spans lie at 200–220, 276–296, 317–337, 357–377, 395–415, and 416–436; these read LAVV…GADI, VAGL…TYLF, LVLA…AIFA, FNLI…PLFV, RLLF…DPTG, and MAPI…LAAL.

Belongs to the TatC family. As to quaternary structure, forms a complex with TatA.

It localises to the cell membrane. In terms of biological role, part of the twin-arginine translocation (Tat) system that transports large folded proteins containing a characteristic twin-arginine motif in their signal peptide across membranes. This is Sec-independent protein translocase protein TatCo from Haloferax volcanii (strain ATCC 29605 / DSM 3757 / JCM 8879 / NBRC 14742 / NCIMB 2012 / VKM B-1768 / DS2) (Halobacterium volcanii).